We begin with the raw amino-acid sequence, 131 residues long: Large ribosomal subunit protein bL19 (131 aa).

Over residues M1 to P11 the composition is skewed to polar residues. The interval M1–A20 is disordered.

It belongs to the bacterial ribosomal protein bL19 family.

This protein is located at the 30S-50S ribosomal subunit interface and may play a role in the structure and function of the aminoacyl-tRNA binding site. This is Large ribosomal subunit protein bL19 from Dehalococcoides mccartyi (strain ATCC BAA-2100 / JCM 16839 / KCTC 5957 / BAV1).